The following is a 143-amino-acid chain: D-aminoacyl-tRNA deacylase (143 aa).

Residues 135 to 136 carry the Gly-cisPro motif, important for rejection of L-amino acids motif; it reads GP.

This sequence belongs to the DTD family. As to quaternary structure, homodimer.

The protein localises to the cytoplasm. It carries out the reaction glycyl-tRNA(Ala) + H2O = tRNA(Ala) + glycine + H(+). The enzyme catalyses a D-aminoacyl-tRNA + H2O = a tRNA + a D-alpha-amino acid + H(+). An aminoacyl-tRNA editing enzyme that deacylates mischarged D-aminoacyl-tRNAs. Also deacylates mischarged glycyl-tRNA(Ala), protecting cells against glycine mischarging by AlaRS. Acts via tRNA-based rather than protein-based catalysis; rejects L-amino acids rather than detecting D-amino acids in the active site. By recycling D-aminoacyl-tRNA to D-amino acids and free tRNA molecules, this enzyme counteracts the toxicity associated with the formation of D-aminoacyl-tRNA entities in vivo and helps enforce protein L-homochirality. The sequence is that of D-aminoacyl-tRNA deacylase from Mycobacterium bovis (strain ATCC BAA-935 / AF2122/97).